The sequence spans 685 residues: UvrABC system protein B (685 aa).

Positions Asp30–Arg188 constitute a Helicase ATP-binding domain. Gly43–Thr50 lines the ATP pocket. The short motif at Tyr96 to Ile119 is the Beta-hairpin element. A Helicase C-terminal domain is found at Gln435–Leu597. Residues Tyr641 to Gly676 enclose the UVR domain.

The protein belongs to the UvrB family. As to quaternary structure, forms a heterotetramer with UvrA during the search for lesions. Interacts with UvrC in an incision complex.

It is found in the cytoplasm. In terms of biological role, the UvrABC repair system catalyzes the recognition and processing of DNA lesions. A damage recognition complex composed of 2 UvrA and 2 UvrB subunits scans DNA for abnormalities. Upon binding of the UvrA(2)B(2) complex to a putative damaged site, the DNA wraps around one UvrB monomer. DNA wrap is dependent on ATP binding by UvrB and probably causes local melting of the DNA helix, facilitating insertion of UvrB beta-hairpin between the DNA strands. Then UvrB probes one DNA strand for the presence of a lesion. If a lesion is found the UvrA subunits dissociate and the UvrB-DNA preincision complex is formed. This complex is subsequently bound by UvrC and the second UvrB is released. If no lesion is found, the DNA wraps around the other UvrB subunit that will check the other stand for damage. In Chlorobium phaeobacteroides (strain DSM 266 / SMG 266 / 2430), this protein is UvrABC system protein B.